A 294-amino-acid chain; its full sequence is ATP phosphoribosyltransferase (294 aa).

Belongs to the ATP phosphoribosyltransferase family. Long subfamily. Mg(2+) is required as a cofactor.

It localises to the cytoplasm. The enzyme catalyses 1-(5-phospho-beta-D-ribosyl)-ATP + diphosphate = 5-phospho-alpha-D-ribose 1-diphosphate + ATP. Its pathway is amino-acid biosynthesis; L-histidine biosynthesis; L-histidine from 5-phospho-alpha-D-ribose 1-diphosphate: step 1/9. Feedback inhibited by histidine. Its function is as follows. Catalyzes the condensation of ATP and 5-phosphoribose 1-diphosphate to form N'-(5'-phosphoribosyl)-ATP (PR-ATP). Has a crucial role in the pathway because the rate of histidine biosynthesis seems to be controlled primarily by regulation of HisG enzymatic activity. The chain is ATP phosphoribosyltransferase from Chlorobaculum parvum (strain DSM 263 / NCIMB 8327) (Chlorobium vibrioforme subsp. thiosulfatophilum).